A 309-amino-acid chain; its full sequence is tRNA uridine(34) hydroxylase (309 aa).

A Rhodanese domain is found at 129 to 223 (SEPGTIVIDT…YLEEVPAEQS (95 aa)). The active-site Cysteine persulfide intermediate is the C183. A disordered region spans residues 288–309 (YAERQRQVELAQARGKRPHIGS).

Belongs to the TrhO family.

It carries out the reaction uridine(34) in tRNA + AH2 + O2 = 5-hydroxyuridine(34) in tRNA + A + H2O. In terms of biological role, catalyzes oxygen-dependent 5-hydroxyuridine (ho5U) modification at position 34 in tRNAs. The chain is tRNA uridine(34) hydroxylase from Mesorhizobium japonicum (strain LMG 29417 / CECT 9101 / MAFF 303099) (Mesorhizobium loti (strain MAFF 303099)).